Reading from the N-terminus, the 461-residue chain is CASP-like protein 4U1 (461 aa).

The tract at residues 1-239 (MASTPRTPAP…RAAETKLPLS (239 aa)) is disordered. Over 1-314 (MASTPRTPAP…AAVAVGERRE (314 aa)) the chain is Cytoplasmic. Over residues 7-69 (TPAPVRSPPP…PLETPPPPSP (63 aa)) the composition is skewed to pro residues. Low complexity-rich tracts occupy residues 116–126 (LSPMRLAAPRL) and 135–155 (TPTG…AAAG). A compositionally biased stretch (pro residues) spans 193 to 204 (SPSPSPTPPSPL). Low complexity predominate over residues 205–221 (TPAAAPVVNNNSNNKNN). The helical transmembrane segment at 315–335 (LSVTLRLATAVLSLAAFSVIA) threads the bilayer. The Extracellular portion of the chain corresponds to 336–354 (SARTSGWAGDYYAHHLQYR). The chain crosses the membrane as a helical span at residues 355-375 (YAVAVNVIVCAYSIAQSFGEI). The Cytoplasmic segment spans residues 376–392 (RRLISPRFIFRSMSSYY). Residues 393–413 (CSLFLDQALAYLLMSASSAAA) traverse the membrane as a helical segment. Residues 414–431 (SRNDLWVSRFGTDAFNRK) lie on the Extracellular side of the membrane. A helical membrane pass occupies residues 432 to 452 (ITSALWLSFIAFLMLALNALI). The Cytoplasmic segment spans residues 453-461 (STANLFSML).

The protein belongs to the Casparian strip membrane proteins (CASP) family. Homodimer and heterodimers.

Its subcellular location is the cell membrane. The protein is CASP-like protein 4U1 of Sorghum bicolor (Sorghum).